The primary structure comprises 358 residues: MTEAIGDEPLGDHVLELQIAEVVDETDEARSLVFAVPDGSDDPEIPPRRLRYAPGQFLTLRVPSERTGSVARCYSLCSSPYTDDALAVTVKRTADGYASNWLCDHAQVGMRIHVLAPSGNFVPTTLDADFLLLAAGSGITPIMSICKSALAEGGGQVTLLYANRDDRSVIFGDALRELAAKYPDRLTVLHWLESLQGLPSASALAKLVAPYTDRPVFICGPGPFMQAARDALAALKVPAQQVHIEVFKSLESDPFAAVKVDDSGDEAPATAVVELDGQTHTVSWPRTAKLLDVLLAAGLDAPFSCREGHCGACACTLRAGKVNMGVNDVLEQQDLDEGLILACQSRPESDSVEVTYDE.

The FAD-binding FR-type domain maps to 12–124 (DHVLELQIAE…LAPSGNFVPT (113 aa)). In terms of domain architecture, 2Fe-2S ferredoxin-type spans 269-358 (ATAVVELDGQ…SDSVEVTYDE (90 aa)). Cysteine 305, cysteine 310, cysteine 313, and cysteine 343 together coordinate [2Fe-2S] cluster.

In terms of assembly, monomer. The two-component system 3-ketosteroid-9-alpha-monooxygenase is composed of an oxygenase component KshA and a reductase component KshB. It depends on FAD as a cofactor. [2Fe-2S] cluster is required as a cofactor.

The enzyme catalyses androsta-1,4-diene-3,17-dione + 2 reduced [2Fe-2S]-[ferredoxin] + O2 + 2 H(+) = 9alpha-hydroxyandrosta-1,4-diene-3,17-dione + 2 oxidized [2Fe-2S]-[ferredoxin] + H2O. It functions in the pathway lipid metabolism; steroid biosynthesis. Involved in the degradation of cholesterol. Catalyzes the introduction of a 9a-hydroxyl moiety into 1,4-androstadiene-3,17-dione (ADD) to yield the 9alpha-hydroxy-1,4-androstadiene-3,17-dione (9OHADD) intermediate which spontaneously form 3-hydroxy-9,10-seconandrost-1,3,5(10)-triene-9,17-dione (HSA) via the meta-cleavage of ring B with concomitant aromatization of ring A. In Mycobacterium tuberculosis (strain CDC 1551 / Oshkosh), this protein is 3-ketosteroid-9-alpha-monooxygenase, ferredoxin reductase component (hmp).